An 858-amino-acid chain; its full sequence is DNA mismatch repair protein MutS (858 aa).

613-620 (GPNMAGKS) provides a ligand contact to ATP.

This sequence belongs to the DNA mismatch repair MutS family.

This protein is involved in the repair of mismatches in DNA. It is possible that it carries out the mismatch recognition step. This protein has a weak ATPase activity. The sequence is that of DNA mismatch repair protein MutS from Dehalococcoides mccartyi (strain ATCC BAA-2266 / KCTC 15142 / 195) (Dehalococcoides ethenogenes (strain 195)).